A 605-amino-acid polypeptide reads, in one-letter code: DNA mismatch repair protein MutL (605 aa).

It belongs to the DNA mismatch repair MutL/HexB family.

In terms of biological role, this protein is involved in the repair of mismatches in DNA. It is required for dam-dependent methyl-directed DNA mismatch repair. May act as a 'molecular matchmaker', a protein that promotes the formation of a stable complex between two or more DNA-binding proteins in an ATP-dependent manner without itself being part of a final effector complex. The chain is DNA mismatch repair protein MutL from Rhizobium meliloti (strain 1021) (Ensifer meliloti).